The following is a 253-amino-acid chain: Pimeloyl-[acyl-carrier protein] methyl ester esterase (253 aa).

Residues Trp18, 78 to 79 (SL), and 139 to 143 (FLALD) each bind substrate. Ser78 serves as the catalytic Nucleophile. Active-site residues include Asp203 and His231. His231 is a substrate binding site.

This sequence belongs to the AB hydrolase superfamily. Carboxylesterase BioH family. As to quaternary structure, monomer.

The protein resides in the cytoplasm. The catalysed reaction is 6-carboxyhexanoyl-[ACP] methyl ester + H2O = 6-carboxyhexanoyl-[ACP] + methanol + H(+). The protein operates within cofactor biosynthesis; biotin biosynthesis. In terms of biological role, the physiological role of BioH is to remove the methyl group introduced by BioC when the pimeloyl moiety is complete. It allows to synthesize pimeloyl-ACP via the fatty acid synthetic pathway through the hydrolysis of the ester bonds of pimeloyl-ACP esters. The polypeptide is Pimeloyl-[acyl-carrier protein] methyl ester esterase (Xanthomonas axonopodis pv. citri (strain 306)).